The chain runs to 358 residues: Peptide chain release factor 1 (358 aa).

Gln233 carries the post-translational modification N5-methylglutamine.

Belongs to the prokaryotic/mitochondrial release factor family. Methylated by PrmC. Methylation increases the termination efficiency of RF1.

It localises to the cytoplasm. In terms of biological role, peptide chain release factor 1 directs the termination of translation in response to the peptide chain termination codons UAG and UAA. In Clostridium botulinum (strain ATCC 19397 / Type A), this protein is Peptide chain release factor 1.